A 394-amino-acid polypeptide reads, in one-letter code: NAD(P)H-quinone oxidoreductase subunit H (394 aa).

It belongs to the complex I 49 kDa subunit family. NDH-1 can be composed of about 15 different subunits; different subcomplexes with different compositions have been identified which probably have different functions.

The protein resides in the cellular thylakoid membrane. It carries out the reaction a plastoquinone + NADH + (n+1) H(+)(in) = a plastoquinol + NAD(+) + n H(+)(out). The enzyme catalyses a plastoquinone + NADPH + (n+1) H(+)(in) = a plastoquinol + NADP(+) + n H(+)(out). In terms of biological role, NDH-1 shuttles electrons from an unknown electron donor, via FMN and iron-sulfur (Fe-S) centers, to quinones in the respiratory and/or the photosynthetic chain. The immediate electron acceptor for the enzyme in this species is believed to be plastoquinone. Couples the redox reaction to proton translocation, and thus conserves the redox energy in a proton gradient. Cyanobacterial NDH-1 also plays a role in inorganic carbon-concentration. The polypeptide is NAD(P)H-quinone oxidoreductase subunit H (Prochlorococcus marinus (strain NATL1A)).